A 399-amino-acid polypeptide reads, in one-letter code: Elongation factor Tu (399 aa).

The tr-type G domain maps to 10-209; it reads KPHVNIGTIG…AVDSYIPTPV (200 aa). The segment at 19–26 is G1; sequence GHVDHGKT. 19–26 is a GTP binding site; it reads GHVDHGKT. Position 26 (Thr-26) interacts with Mg(2+). The segment at 60 to 64 is G2; it reads GITIA. Residues 81-84 are G3; it reads DCPG. GTP-binding positions include 81–85 and 136–139; these read DCPGH and NKAD. Residues 136–139 form a G4 region; it reads NKAD. A G5 region spans residues 174-176; that stretch reads SAL.

The protein belongs to the TRAFAC class translation factor GTPase superfamily. Classic translation factor GTPase family. EF-Tu/EF-1A subfamily. Monomer.

Its subcellular location is the cytoplasm. It carries out the reaction GTP + H2O = GDP + phosphate + H(+). Functionally, GTP hydrolase that promotes the GTP-dependent binding of aminoacyl-tRNA to the A-site of ribosomes during protein biosynthesis. In Campylobacter concisus (strain 13826), this protein is Elongation factor Tu.